The sequence spans 230 residues: Large ribosomal subunit protein uL1 (230 aa).

The protein belongs to the universal ribosomal protein uL1 family. In terms of assembly, part of the 50S ribosomal subunit.

Binds directly to 23S rRNA. The L1 stalk is quite mobile in the ribosome, and is involved in E site tRNA release. In terms of biological role, protein L1 is also a translational repressor protein, it controls the translation of the L11 operon by binding to its mRNA. The sequence is that of Large ribosomal subunit protein uL1 from Erythrobacter litoralis (strain HTCC2594).